Here is a 331-residue protein sequence, read N- to C-terminus: Holliday junction branch migration complex subunit RuvB (331 aa).

Residues 1–182 (MSNDTLHKYE…FGIPLHLEFY (182 aa)) form a large ATPase domain (RuvB-L) region. ATP contacts are provided by residues leucine 21, arginine 22, glycine 63, lysine 66, threonine 67, threonine 68, 129–131 (EDY), arginine 172, tyrosine 182, and arginine 219. Position 67 (threonine 67) interacts with Mg(2+). Positions 183 to 254 (SVDELVLVIK…FANSALFRLG (72 aa)) are small ATPAse domain (RuvB-S). The interval 257 to 331 (GAGFDKMDLK…FEYLLSSKYI (75 aa)) is head domain (RuvB-H). The DNA site is built by arginine 310 and arginine 315.

Belongs to the RuvB family. Homohexamer. Forms an RuvA(8)-RuvB(12)-Holliday junction (HJ) complex. HJ DNA is sandwiched between 2 RuvA tetramers; dsDNA enters through RuvA and exits via RuvB. An RuvB hexamer assembles on each DNA strand where it exits the tetramer. Each RuvB hexamer is contacted by two RuvA subunits (via domain III) on 2 adjacent RuvB subunits; this complex drives branch migration. In the full resolvosome a probable DNA-RuvA(4)-RuvB(12)-RuvC(2) complex forms which resolves the HJ.

Its subcellular location is the cytoplasm. The enzyme catalyses ATP + H2O = ADP + phosphate + H(+). The RuvA-RuvB-RuvC complex processes Holliday junction (HJ) DNA during genetic recombination and DNA repair, while the RuvA-RuvB complex plays an important role in the rescue of blocked DNA replication forks via replication fork reversal (RFR). RuvA specifically binds to HJ cruciform DNA, conferring on it an open structure. The RuvB hexamer acts as an ATP-dependent pump, pulling dsDNA into and through the RuvAB complex. RuvB forms 2 homohexamers on either side of HJ DNA bound by 1 or 2 RuvA tetramers; 4 subunits per hexamer contact DNA at a time. Coordinated motions by a converter formed by DNA-disengaged RuvB subunits stimulates ATP hydrolysis and nucleotide exchange. Immobilization of the converter enables RuvB to convert the ATP-contained energy into a lever motion, pulling 2 nucleotides of DNA out of the RuvA tetramer per ATP hydrolyzed, thus driving DNA branch migration. The RuvB motors rotate together with the DNA substrate, which together with the progressing nucleotide cycle form the mechanistic basis for DNA recombination by continuous HJ branch migration. Branch migration allows RuvC to scan DNA until it finds its consensus sequence, where it cleaves and resolves cruciform DNA. The chain is Holliday junction branch migration complex subunit RuvB from Anaplasma marginale (strain Florida).